Consider the following 352-residue polypeptide: N-acetyl-gamma-glutamyl-phosphate reductase (352 aa).

Cys155 is a catalytic residue.

This sequence belongs to the NAGSA dehydrogenase family. Type 1 subfamily.

It localises to the cytoplasm. It catalyses the reaction N-acetyl-L-glutamate 5-semialdehyde + phosphate + NADP(+) = N-acetyl-L-glutamyl 5-phosphate + NADPH + H(+). It functions in the pathway amino-acid biosynthesis; L-arginine biosynthesis; N(2)-acetyl-L-ornithine from L-glutamate: step 3/4. In terms of biological role, catalyzes the NADPH-dependent reduction of N-acetyl-5-glutamyl phosphate to yield N-acetyl-L-glutamate 5-semialdehyde. This is N-acetyl-gamma-glutamyl-phosphate reductase from Rippkaea orientalis (strain PCC 8801 / RF-1) (Cyanothece sp. (strain PCC 8801)).